Consider the following 880-residue polypeptide: Alanine--tRNA ligase (880 aa).

Residues His-566, His-570, Cys-668, and His-672 each coordinate Zn(2+).

The protein belongs to the class-II aminoacyl-tRNA synthetase family. Zn(2+) serves as cofactor.

It localises to the cytoplasm. It carries out the reaction tRNA(Ala) + L-alanine + ATP = L-alanyl-tRNA(Ala) + AMP + diphosphate. Its function is as follows. Catalyzes the attachment of alanine to tRNA(Ala) in a two-step reaction: alanine is first activated by ATP to form Ala-AMP and then transferred to the acceptor end of tRNA(Ala). Also edits incorrectly charged Ser-tRNA(Ala) and Gly-tRNA(Ala) via its editing domain. This is Alanine--tRNA ligase from Parafrankia sp. (strain EAN1pec).